We begin with the raw amino-acid sequence, 89 residues long: Small ribosomal subunit protein uS15 (89 aa).

Belongs to the universal ribosomal protein uS15 family. Part of the 30S ribosomal subunit. Forms a bridge to the 50S subunit in the 70S ribosome, contacting the 23S rRNA.

One of the primary rRNA binding proteins, it binds directly to 16S rRNA where it helps nucleate assembly of the platform of the 30S subunit by binding and bridging several RNA helices of the 16S rRNA. Its function is as follows. Forms an intersubunit bridge (bridge B4) with the 23S rRNA of the 50S subunit in the ribosome. The polypeptide is Small ribosomal subunit protein uS15 (Clavibacter michiganensis subsp. michiganensis (strain NCPPB 382)).